The primary structure comprises 557 residues: 6-methylpretetramide 4-monooxygenase (557 aa).

Residues 9 to 38 (QVLIAGAGPVGLTLAHELTRRRVRVRVIDR) and 278 to 288 (MRSGRCFVAGD) each bind FAD. The interval 530–557 (LPEDTAPGAGDSAGRPAPDGTRRGVTTE) is disordered.

This sequence belongs to the PheA/TfdB FAD monooxygenase family. FAD serves as cofactor.

It carries out the reaction 6-methylpretetramide + NADPH + O2 + 2 H(+) = 4-hydroxy-6-methylpretetramide + NADP(+) + H2O. The enzyme catalyses 4-hydroxy-6-methylpretetramide + NADPH + O2 = 4-dedimethylamino-4-oxo-anhydrotetracycline + NADP(+) + H2O. It functions in the pathway antibiotic biosynthesis; oxytetracycline biosynthesis. In terms of biological role, involved in the biosynthesis of the tetracycline antibiotic, oxytetracycline. Catalyzes the double hydroxylation of 6-methylpretetramide to yield 4-keto-anhydrotetracycline, via the insertion of oxygen atoms at the C-12a and C-4 positions of 6-pretetramid. The chain is 6-methylpretetramide 4-monooxygenase from Streptomyces rimosus.